The following is a 155-amino-acid chain: MSRRGTAEEKTAKSDPIYRNRLVNMLVNRILKHGKKSLAYQIIYRAVKKIQQKTETNPLSVLRQAIRGVTPDIAVKSRRVGGSTHQVPVEIGSTQGKALAIRWLLGASRKRPGRNMAFKLSSELVDAAKGSGDAIRKKEETHRMAEANRAFAHFR.

Belongs to the universal ribosomal protein uS7 family. Part of the 30S ribosomal subunit.

The protein localises to the plastid. It localises to the chloroplast. Functionally, one of the primary rRNA binding proteins, it binds directly to 16S rRNA where it nucleates assembly of the head domain of the 30S subunit. The sequence is that of Small ribosomal subunit protein uS7cz/uS7cy (rps7-A) from Ceratophyllum demersum (Rigid hornwort).